The sequence spans 462 residues: Aquaporin-1 (462 aa).

Residues 1–11 (MTMRSPLTNDH) show a composition bias toward polar residues. The segment at 1–24 (MTMRSPLTNDHPQPLRASPLSEHD) is disordered. At 1–146 (MTMRSPLTND…KWMNSDWKNH (146 aa)) the chain is on the cytoplasmic side. The chain crosses the membrane as a helical span at residues 147–167 (IVAVIGELIGTSLFLFFGYAG). The Extracellular portion of the chain corresponds to 168–182 (IEVAKLQGREPPDLE). A helical transmembrane segment spans residues 183–203 (VLFYISATFGASLMVTAWIFF). The Cytoplasmic portion of the chain corresponds to 204–229 (RISGGLFNPAVTLALAILKAVSPIRA). Positions 211 to 213 (NPA) match the NPA 1 motif. The helical transmembrane segment at 230 to 250 (FLLVITQLGASCLAAILVQEI) threads the bilayer. Residues 251–269 (FPKQLDVATTLGSGTSMGQ) are Extracellular-facing. The chain crosses the membrane as a helical span at residues 270-290 (GFVIEAITTAALIFTIIMLAV). Topologically, residues 291–296 (EKHKAT) are cytoplasmic. Residues 297 to 317 (FVAPIGIGLALFVAHMVAVPF) form a helical membrane-spanning segment. Over 318 to 341 (TGASLNPARSFGPSAIVWNFPREH) the chain is Extracellular. Residues 323-325 (NPA) carry the NPA 2 motif. A helical transmembrane segment spans residues 342–362 (WIYWVGPILGAGLAVLFFRLI). Residues 363 to 462 (KLMEYEMANP…WRRQQYRNVV (100 aa)) are Cytoplasmic-facing. Positions 407 to 433 (GKSWYRDDSSSGSMRRKESVNSFTGGR) are disordered. Basic and acidic residues predominate over residues 410–425 (WYRDDSSSGSMRRKES).

The protein belongs to the MIP/aquaporin (TC 1.A.8) family.

The protein localises to the membrane. It carries out the reaction H2O(in) = H2O(out). In terms of biological role, water channel required to facilitate the transport of water across membranes. Involved in conidiation. The protein is Aquaporin-1 of Botryotinia fuckeliana (strain B05.10) (Noble rot fungus).